The following is a 475-amino-acid chain: Zinc finger protein 383 (475 aa).

Residues 6–77 form the KRAB domain; it reads VMFSDVSIDF…GRELTRGLCS (72 aa). C2H2-type zinc fingers lie at residues 170 to 192, 198 to 220, 226 to 248, 254 to 276, 282 to 304, 310 to 332, 338 to 360, 366 to 388, 394 to 416, 422 to 444, and 450 to 472; these read FECK…QRIH, YECK…LKIH, YECK…QRIH, YACK…VRIH, YDCK…QRIH, FECL…QRIH, YECN…LRIH, and YNCK…QGIH.

It belongs to the krueppel C2H2-type zinc-finger protein family.

It localises to the nucleus. It is found in the cytoplasm. Its function is as follows. May function as a transcriptional repressor, suppressing transcriptional activities mediated by MAPK signaling pathways. This is Zinc finger protein 383 (ZNF383) from Macaca fascicularis (Crab-eating macaque).